A 285-amino-acid polypeptide reads, in one-letter code: Acetyl-coenzyme A carboxylase carboxyl transferase subunit beta (285 aa).

Positions 29 to 285 (IMTKCPKCKK…ILKIHQEVTK (257 aa)) constitute a CoA carboxyltransferase N-terminal domain. Residues Cys33, Cys36, Cys52, and Cys55 each contribute to the Zn(2+) site. Residues 33–55 (CPKCKKIMYTKELAENLNVCFNC) form a C4-type zinc finger.

The protein belongs to the AccD/PCCB family. In terms of assembly, acetyl-CoA carboxylase is a heterohexamer composed of biotin carboxyl carrier protein (AccB), biotin carboxylase (AccC) and two subunits each of ACCase subunit alpha (AccA) and ACCase subunit beta (AccD). Zn(2+) is required as a cofactor.

It is found in the cytoplasm. It catalyses the reaction N(6)-carboxybiotinyl-L-lysyl-[protein] + acetyl-CoA = N(6)-biotinyl-L-lysyl-[protein] + malonyl-CoA. It participates in lipid metabolism; malonyl-CoA biosynthesis; malonyl-CoA from acetyl-CoA: step 1/1. In terms of biological role, component of the acetyl coenzyme A carboxylase (ACC) complex. Biotin carboxylase (BC) catalyzes the carboxylation of biotin on its carrier protein (BCCP) and then the CO(2) group is transferred by the transcarboxylase to acetyl-CoA to form malonyl-CoA. This is Acetyl-coenzyme A carboxylase carboxyl transferase subunit beta from Staphylococcus aureus (strain Newman).